Consider the following 400-residue polypeptide: MNITGIITEYNPLHKGHIYHINKTKELTSCDGIVCIMSGNFVQRGIPAIMDKWTRCELALNSGVDLVIELPSVYSLSSAEFFAYGSISLLNSIGIINNICFGSESGNIDDIKSIAKILNNEPSEFKNHLKDYLDKGVSYPVARSKALVEYFNDNLETQEILKSSNNILGIEYCKSLLKLKSTIIPYTIQRKGSNYNDDKLESKFSSATAIRSHVKNSKNINILKDILPSKTFNYLYDKFNNNNLVFEDSMFSFIKYKSLTLKNKLENLPDVKEGLHNKIYSELKNSNSFYELVSNIKSKRYAYTRISRILCQYFIGMENFNLEYLRTKKSPYGRVLGFNDTGRKILKEMKKKSSIPIYMKLPKTLNDTLKLDIQSTYAYSMINKSVSYDSDFKTSPIYLK.

ATP-binding positions include 7 to 20, G102, N165, and R190; that span reads ITEY…HIYH.

Belongs to the TmcAL family.

It localises to the cytoplasm. The catalysed reaction is cytidine(34) in elongator tRNA(Met) + acetate + ATP = N(4)-acetylcytidine(34) in elongator tRNA(Met) + AMP + diphosphate. In terms of biological role, catalyzes the formation of N(4)-acetylcytidine (ac(4)C) at the wobble position of elongator tRNA(Met), using acetate and ATP as substrates. First activates an acetate ion to form acetyladenylate (Ac-AMP) and then transfers the acetyl group to tRNA to form ac(4)C34. In Clostridium novyi (strain NT), this protein is tRNA(Met) cytidine acetate ligase.